Here is a 463-residue protein sequence, read N- to C-terminus: Mitochondrial dynamics protein MID51 (463 aa).

Over Met1–Val23 the chain is Mitochondrial intermembrane. Residues Leu24–Val46 traverse the membrane as a helical segment. The Cytoplasmic portion of the chain corresponds to Lys47 to Thr463. The tract at residues Met49 to Gln195 is dimerization. 4 positions are modified to phosphoserine: Ser55, Ser59, Ser79, and Ser94. Residues Pro57 to Ser79 are disordered. The segment at Ala104 to Gln123 is disordered. Residues Ala160–Arg169 form an important for interaction with DNM1L region. 3 residues coordinate ADP: Ser187, Ser189, and His201. The segment at Arg234–Arg243 is important for interaction with DNM1L. 3 residues coordinate ADP: Ser340, Arg342, and Lys368.

It belongs to the MID49/MID51 family. In terms of assembly, homodimer. Interacts with DNM1L.

It localises to the mitochondrion outer membrane. Its function is as follows. Mitochondrial outer membrane protein which regulates mitochondrial fission/fusion dynamics. Promotes the recruitment and association of the fission mediator dynamin-related protein 1 (DNM1L) to the mitochondrial surface independently of the mitochondrial fission FIS1 and MFF proteins. Regulates DNM1L GTPase activity and DNM1L oligomerization. Binds ADP and can also bind GDP, although with lower affinity. Does not bind CDP, UDP, ATP, AMP or GTP. Inhibits DNM1L GTPase activity in the absence of bound ADP. Requires ADP to stimulate DNM1L GTPase activity and the assembly of DNM1L into long, oligomeric tubules with a spiral pattern, as opposed to the ring-like DNM1L oligomers observed in the absence of bound ADP. Does not require ADP for its function in recruiting DNM1L. This is Mitochondrial dynamics protein MID51 (MIEF1) from Pongo abelii (Sumatran orangutan).